Here is a 501-residue protein sequence, read N- to C-terminus: MHQDNEQLSLNDQMQRRFDERRHLQESGINPYPCSFEVTGHSRQIIEHFKEDAEEKVSVAGRIMAIRRMGKASFFHIQDSDGRMQIYLKKDEVGDDAYATFKLLDIGDIVGVNGYTFRTRTGEISVHAESFELLCKSLRPIPVAKEKEVEGEKVVFDAFADRELRYRQRYVDLIVNPEVRSTFIKRSAIVSHIRSFFTSQGWLEVETPILQPIYGGAAARPFTTHHNALDMQLYLRIANELYLKRLIVGGFDGVFEFAKDFRNEGIDRFHNPEFTQVELYVAYKDYDWMMRLVEELFQQTAIAVNGTAMTTFLGHEISLEAPFRRLTIADSIREYTGAEIEGKTETELRNLAKDLGLELDPKIGSGKIIDEIFGEFVEPKLIQPTFITDYPTEMSPLAKPHRSKPGLVERFELIAGGKEICNSFSELNDPVIQRQRLEEQASLRQRGDDEAMVVDEDFLRALEYGMPPTAGLGIGIDRLVMLITGEESIRDVIFFPHLKPE.

2 residues coordinate Mg(2+): Glu412 and Glu419.

Belongs to the class-II aminoacyl-tRNA synthetase family. In terms of assembly, homodimer. Mg(2+) is required as a cofactor.

The protein resides in the cytoplasm. The enzyme catalyses tRNA(Lys) + L-lysine + ATP = L-lysyl-tRNA(Lys) + AMP + diphosphate. The sequence is that of Lysine--tRNA ligase from Chlorobium luteolum (strain DSM 273 / BCRC 81028 / 2530) (Pelodictyon luteolum).